Reading from the N-terminus, the 372-residue chain is uncharacterized protein (372 aa).

The tract at residues 328 to 353 is disordered; the sequence is KKGQPCKDEDAVTVPLPSSDPGKETQ.

Its function is as follows. Induces the SOS system when expressed in E.coli, therefore, it may play a role in DNA metabolism and/or in genome stability. This is an uncharacterized protein from Saccharomyces cerevisiae (strain ATCC 204508 / S288c) (Baker's yeast).